The chain runs to 364 residues: Methylthioribose-1-phosphate isomerase (364 aa).

The Proton donor role is filled by aspartate 254.

This sequence belongs to the eIF-2B alpha/beta/delta subunits family. MtnA subfamily.

The protein localises to the cytoplasm. The protein resides in the nucleus. The enzyme catalyses 5-(methylsulfanyl)-alpha-D-ribose 1-phosphate = 5-(methylsulfanyl)-D-ribulose 1-phosphate. The protein operates within amino-acid biosynthesis; L-methionine biosynthesis via salvage pathway; L-methionine from S-methyl-5-thio-alpha-D-ribose 1-phosphate: step 1/6. In terms of biological role, catalyzes the interconversion of methylthioribose-1-phosphate (MTR-1-P) into methylthioribulose-1-phosphate (MTRu-1-P). The polypeptide is Methylthioribose-1-phosphate isomerase (Drosophila melanogaster (Fruit fly)).